The chain runs to 274 residues: Secreted RxLR effector protein 144 (274 aa).

An N-terminal signal peptide occupies residues 1–20; the sequence is MRPWLLLLVGLSSFFALSTS. Residues 49-72 carry the RxLR-dEER motif; the sequence is RKLRAFGGDTNTLKDSGKARREEK.

This sequence belongs to the RxLR effector family.

The protein resides in the secreted. Its subcellular location is the host nucleus. It localises to the host cytoplasm. In terms of biological role, secreted effector that completely suppresses the host cell death induced by cell death-inducing proteins. The polypeptide is Secreted RxLR effector protein 144 (Plasmopara viticola (Downy mildew of grapevine)).